We begin with the raw amino-acid sequence, 165 residues long: Growth arrest and DNA damage-inducible protein GADD45 alpha (165 aa).

At Thr-2 the chain carries Phosphothreonine.

This sequence belongs to the GADD45 family. As to quaternary structure, interacts with AURKA, PCNA, GADD45GIP1 and MAPK14.

It is found in the nucleus. Functionally, might affect PCNA interaction with some CDK (cell division protein kinase) complexes; stimulates DNA excision repair in vitro and inhibits entry of cells into S phase. In T-cells, functions as a regulator of p38 MAPKs by inhibiting p88 phosphorylation and activity. This chain is Growth arrest and DNA damage-inducible protein GADD45 alpha (GADD45A), found in Bos taurus (Bovine).